The chain runs to 157 residues: Endoribonuclease YbeY (157 aa).

Zn(2+)-binding residues include H122, H126, and H132.

This sequence belongs to the endoribonuclease YbeY family. It depends on Zn(2+) as a cofactor.

It localises to the cytoplasm. In terms of biological role, single strand-specific metallo-endoribonuclease involved in late-stage 70S ribosome quality control and in maturation of the 3' terminus of the 16S rRNA. The sequence is that of Endoribonuclease YbeY from Lysinibacillus sphaericus (strain C3-41).